Reading from the N-terminus, the 617-residue chain is ATP-dependent rRNA helicase SPB4 (617 aa).

The Q motif signature appears at 7–35 (WADLDYELQPWIKKAINVSGFDSMTPVQA). One can recognise a Helicase ATP-binding domain in the interval 38-224 (IPMFAKNKDV…KTGLRNPVKI (187 aa)). 51–58 (SVTGSGKT) contacts ATP. Residues 172-175 (DEAD) carry the DEAD box motif. The 155-residue stretch at 252 to 406 (NLIHIMNNIR…ETDINKNKIS (155 aa)) folds into the Helicase C-terminal domain.

The protein belongs to the DEAD box helicase family. DDX55/SPB4 subfamily. As to quaternary structure, component of pre-60S ribosomal complexes.

Its subcellular location is the nucleus. The protein localises to the nucleolus. The enzyme catalyses ATP + H2O = ADP + phosphate + H(+). Its function is as follows. ATP-binding RNA helicase involved in the biogenesis of 60S ribosomal subunits. Binds 90S pre-ribosomal particles and dissociates from pre-60S ribosomal particles after processing of 27SB pre-rRNA. Required for the normal formation of 18S rRNA through the processing of pre-rRNAs at sites A0, A1 and A2, and the normal formation of 25S and 5.8S rRNAs through the processing of pre-rRNAs at sites C1 and C2. The polypeptide is ATP-dependent rRNA helicase SPB4 (Candida glabrata (strain ATCC 2001 / BCRC 20586 / JCM 3761 / NBRC 0622 / NRRL Y-65 / CBS 138) (Yeast)).